Reading from the N-terminus, the 460-residue chain is 5-hydroxytryptamine receptor 2C (460 aa).

An N-terminal signal peptide occupies residues 1–32; sequence MVNLGNAVRSLLMHLIGLLVWQFDISISPVAA. Residues 33-56 are Extracellular-facing; it reads IVTDTFNSSDGGRLFQFPDGVQNW. A helical membrane pass occupies residues 57-81; it reads PALSIVVIIIMTIGGNILVIMAVSM. Residues 82-87 lie on the Cytoplasmic side of the membrane; that stretch reads EKKLHN. A helical transmembrane segment spans residues 88–112; that stretch reads ATNYFLMSLAIADMLVGLLVMPLSL. At 113 to 129 the chain is on the extracellular side; the sequence is LAILYDYVWPLPRYLCP. Cysteines 128 and 208 form a disulfide. A helical transmembrane segment spans residues 130–152; that stretch reads VWISLDVLFSTASIMHLCAISLD. Residue Thr-140 participates in ergotamine binding. Residues 152-154 carry the DRY motif; important for ligand-induced conformation changes motif; it reads DRY. Topologically, residues 153–168 are cytoplasmic; sequence RYVAIRNPIEHSRFNS. Residues 169–190 form a helical membrane-spanning segment; sequence RTKAIMKIAIVWAISIGVSVPI. The Extracellular portion of the chain corresponds to 191-214; the sequence is PVIGLRDESKVFVNNTTCVLNDPN. N-linked (GlcNAc...) asparagine glycosylation is found at Asn-204 and Asn-205. Leu-210 is an ergotamine binding site. A helical transmembrane segment spans residues 215–237; it reads FVLIGSFVAFFIPLTIMVITYFL. The Cytoplasmic segment spans residues 238-313; that stretch reads TIYVLRRQTL…AINNEKKASK (76 aa). Positions 276–301 are disordered; it reads EEENAPNPNPDQKPRRKKKEKRPRGT. Positions 289–299 are enriched in basic residues; sequence PRRKKKEKRPR. Residues 314 to 338 traverse the membrane as a helical segment; that stretch reads VLGIVFFVFLIMWCPFFITNILSVL. Residues Cys-339 and Cys-343 are joined by a disulfide bond. At 339–349 the chain is on the extracellular side; the sequence is CGKACNQKLME. A helical transmembrane segment spans residues 350-372; it reads KLLNVFVWIGYVCSGINPLVYTL. Positions 366–370 match the NPxxY motif; important for ligand-induced conformation changes and signaling motif; the sequence is NPLVY. The Cytoplasmic portion of the chain corresponds to 373–460; the sequence is FNKIYRRAFS…NVVSERISSV (88 aa). Positions 458–460 match the PDZ-binding motif; it reads SSV.

Belongs to the G-protein coupled receptor 1 family. In terms of assembly, interacts with MPDZ. Interacts with ARRB2. Interacts with MPP3; this interaction stabilizes the receptor at the plasma membrane and prevents the desensitization of the HTR2C receptor-mediated calcium response.

It is found in the cell membrane. G-protein coupled receptor for 5-hydroxytryptamine (serotonin). Also functions as a receptor for various drugs and psychoactive substances, including ergot alkaloid derivatives, 1-2,5,-dimethoxy-4-iodophenyl-2-aminopropane (DOI) and lysergic acid diethylamide (LSD). Ligand binding causes a conformation change that triggers signaling via guanine nucleotide-binding proteins (G proteins) and modulates the activity of downstream effectors. HTR2C is coupled to G(q)/G(11) G alpha proteins and activates phospholipase C-beta, releasing diacylglycerol (DAG) and inositol 1,4,5-trisphosphate (IP3) second messengers that modulate the activity of phosphatidylinositol 3-kinase and promote the release of Ca(2+) ions from intracellular stores, respectively. Beta-arrestin family members inhibit signaling via G proteins and mediate activation of alternative signaling pathways. Regulates neuronal activity via the activation of short transient receptor potential calcium channels in the brain, and thereby modulates the activation of pro-opiomelanocortin neurons and the release of CRH that then regulates the release of corticosterone. Plays a role in the regulation of appetite and eating behavior, responses to anxiogenic stimuli and stress. Plays a role in insulin sensitivity and glucose homeostasis. In Rattus norvegicus (Rat), this protein is 5-hydroxytryptamine receptor 2C.